Reading from the N-terminus, the 251-residue chain is Methionine aminopeptidase (251 aa).

Histidine 76 is a substrate binding site. The a divalent metal cation site is built by aspartate 93, aspartate 104, and histidine 168. Residue histidine 175 coordinates substrate. 2 residues coordinate a divalent metal cation: glutamate 202 and glutamate 233.

It belongs to the peptidase M24A family. Methionine aminopeptidase type 1 subfamily. In terms of assembly, monomer. The cofactor is Co(2+). It depends on Zn(2+) as a cofactor. Requires Mn(2+) as cofactor. Fe(2+) is required as a cofactor.

The catalysed reaction is Release of N-terminal amino acids, preferentially methionine, from peptides and arylamides.. Functionally, removes the N-terminal methionine from nascent proteins. The N-terminal methionine is often cleaved when the second residue in the primary sequence is small and uncharged (Met-Ala-, Cys, Gly, Pro, Ser, Thr, or Val). Requires deformylation of the N(alpha)-formylated initiator methionine before it can be hydrolyzed. The polypeptide is Methionine aminopeptidase (Staphylococcus epidermidis (strain ATCC 35984 / DSM 28319 / BCRC 17069 / CCUG 31568 / BM 3577 / RP62A)).